Reading from the N-terminus, the 223-residue chain is Probable tRNA-splicing endonuclease subunit tsp-1 (223 aa).

The tract at residues 1-55 (MESGSTPPTDKQIRENEQDGTGHQGKLLARPTSTRQQQQQQQQQPSHSVSQSVSQ) is disordered. Low complexity predominate over residues 30–55 (RPTSTRQQQQQQQQQPSHSVSQSVSQ).

It belongs to the SEN15 family. In terms of assembly, tRNA splicing endonuclease is a heterotetramer composed of tsp-2/sen2, tsp-1/sen15, tsp-4/sen34 and tsp-5/sen54. Interacts directly with tsp-4/sen34.

Non-catalytic subunit of the tRNA-splicing endonuclease complex, a complex responsible for identification and cleavage of the splice sites in pre-tRNA. It cleaves pre-tRNA at the 5' and 3' splice sites to release the intron. The products are an intron and two tRNA half-molecules bearing 2',3' cyclic phosphate and 5'-OH termini. There are no conserved sequences at the splice sites, but the intron is invariably located at the same site in the gene, placing the splice sites an invariant distance from the constant structural features of the tRNA body. This Neurospora crassa (strain ATCC 24698 / 74-OR23-1A / CBS 708.71 / DSM 1257 / FGSC 987) protein is Probable tRNA-splicing endonuclease subunit tsp-1 (tsp-1).